We begin with the raw amino-acid sequence, 505 residues long: L-carnitine/gamma-butyrobetaine antiporter (505 aa).

12 helical membrane-spanning segments follow: residues 10–30, 51–71, 92–112, 143–163, 195–215, 231–251, 263–283, 316–336, 347–367, 403–423, 446–466, and 475–495; these read IEPK…WLTV, WGWA…WLVF, IFMM…SIEI, GPLP…FFFV, FYLV…TPLV, LDAI…ACGL, SYLS…SFIM, WTVF…IFLA, LCFG…TVLG, LSTA…VTLI, LLVR…LLAL, and AIIA…LSFI.

Belongs to the BCCT transporter (TC 2.A.15) family. CaiT subfamily. Homotrimer.

It is found in the cell inner membrane. It catalyses the reaction 4-(trimethylamino)butanoate(in) + (R)-carnitine(out) = 4-(trimethylamino)butanoate(out) + (R)-carnitine(in). It participates in amine and polyamine metabolism; carnitine metabolism. Its function is as follows. Catalyzes the exchange of L-carnitine for gamma-butyrobetaine. The sequence is that of L-carnitine/gamma-butyrobetaine antiporter from Salmonella choleraesuis (strain SC-B67).